Reading from the N-terminus, the 87-residue chain is Beta-mammal toxin Css4 (87 aa).

The first 19 residues, 1 to 19, serve as a signal peptide directing secretion; that stretch reads MNSLLMITACLALVGTVWA. The 66-residue stretch at 20–85 folds into the LCN-type CS-alpha/beta domain; sequence KEGYLVNSYT…VWPLPNKTCN (66 aa). Intrachain disulfides connect Cys-31–Cys-84, Cys-35–Cys-60, Cys-44–Cys-65, and Cys-48–Cys-67. An Asparagine amide modification is found at Asn-85.

Belongs to the long (4 C-C) scorpion toxin superfamily. Sodium channel inhibitor family. Beta subfamily. As to expression, expressed by the venom gland.

It localises to the secreted. In terms of biological role, beta toxins bind voltage-independently at site-4 of sodium channels (Nav) and shift the voltage of activation toward more negative potentials thereby affecting sodium channel activation and promoting spontaneous and repetitive firing. This toxin is active only on mammals. This Centruroides suffusus (Durango bark scorpion) protein is Beta-mammal toxin Css4.